Consider the following 323-residue polypeptide: Beta-ketoacyl-[acyl-carrier-protein] synthase III (323 aa).

Catalysis depends on residues C114 and H250. Residues 251–255 (QANIR) are ACP-binding. Residue N280 is part of the active site.

Belongs to the thiolase-like superfamily. FabH family. In terms of assembly, homodimer.

Its subcellular location is the cytoplasm. The catalysed reaction is malonyl-[ACP] + acetyl-CoA + H(+) = 3-oxobutanoyl-[ACP] + CO2 + CoA. It functions in the pathway lipid metabolism; fatty acid biosynthesis. Its function is as follows. Catalyzes the condensation reaction of fatty acid synthesis by the addition to an acyl acceptor of two carbons from malonyl-ACP. Catalyzes the first condensation reaction which initiates fatty acid synthesis and may therefore play a role in governing the total rate of fatty acid production. Possesses both acetoacetyl-ACP synthase and acetyl transacylase activities. Its substrate specificity determines the biosynthesis of branched-chain and/or straight-chain of fatty acids. This Roseobacter denitrificans (strain ATCC 33942 / OCh 114) (Erythrobacter sp. (strain OCh 114)) protein is Beta-ketoacyl-[acyl-carrier-protein] synthase III.